Reading from the N-terminus, the 235-residue chain is 2,3,4,5-tetrahydropyridine-2,6-dicarboxylate N-acetyltransferase (235 aa).

Belongs to the transferase hexapeptide repeat family. DapH subfamily.

The enzyme catalyses (S)-2,3,4,5-tetrahydrodipicolinate + acetyl-CoA + H2O = L-2-acetamido-6-oxoheptanedioate + CoA. It participates in amino-acid biosynthesis; L-lysine biosynthesis via DAP pathway; LL-2,6-diaminopimelate from (S)-tetrahydrodipicolinate (acetylase route): step 1/3. Catalyzes the transfer of an acetyl group from acetyl-CoA to tetrahydrodipicolinate. In Exiguobacterium sp. (strain ATCC BAA-1283 / AT1b), this protein is 2,3,4,5-tetrahydropyridine-2,6-dicarboxylate N-acetyltransferase.